We begin with the raw amino-acid sequence, 603 residues long: Isocitrate dehydrogenase kinase/phosphatase (603 aa).

ATP is bound by residues Ala-327–Leu-333 and Lys-348. Residue Asp-383 is part of the active site.

It belongs to the AceK family.

It is found in the cytoplasm. The enzyme catalyses L-seryl-[isocitrate dehydrogenase] + ATP = O-phospho-L-seryl-[isocitrate dehydrogenase] + ADP + H(+). Functionally, bifunctional enzyme which can phosphorylate or dephosphorylate isocitrate dehydrogenase (IDH) on a specific serine residue. This is a regulatory mechanism which enables bacteria to bypass the Krebs cycle via the glyoxylate shunt in response to the source of carbon. When bacteria are grown on glucose, IDH is fully active and unphosphorylated, but when grown on acetate or ethanol, the activity of IDH declines drastically concomitant with its phosphorylation. The polypeptide is Isocitrate dehydrogenase kinase/phosphatase (Burkholderia mallei (strain ATCC 23344)).